The chain runs to 853 residues: DNA mismatch repair protein MutS (853 aa).

614-621 (GPNMGGKS) is an ATP binding site.

Belongs to the DNA mismatch repair MutS family.

In terms of biological role, this protein is involved in the repair of mismatches in DNA. It is possible that it carries out the mismatch recognition step. This protein has a weak ATPase activity. The chain is DNA mismatch repair protein MutS from Shigella flexneri serotype 5b (strain 8401).